A 319-amino-acid polypeptide reads, in one-letter code: F-box only protein 8 (319 aa).

Positions 68–111 (FINLEMLPPELSFTILSYLNATDLCLASCVWQDLANDELLWQGL) constitute an F-box domain. The SEC7 domain occupies 146-276 (FNANPDEGVN…LILLSIDLTS (131 aa)).

May promote guanine-nucleotide exchange on an ARF. Promotes the activation of ARF through replacement of GDP with GTP (Potential). The protein is F-box only protein 8 (FBXO8) of Homo sapiens (Human).